The sequence spans 347 residues: uncharacterized protein (347 aa).

An N-terminal signal peptide occupies residues 1–21; that stretch reads MRYRIFLLFFFALLPTSLVWA.

This is an uncharacterized protein from Escherichia coli (strain K12).